We begin with the raw amino-acid sequence, 180 residues long: Pro-glucagon (180 aa).

A signal peptide spans 1–20 (MKSLYFVAGLFVMLVQGSWQ). The span at 25-35 (NTEEKSSSFPA) shows a compositional bias: polar residues. The tract at residues 25 to 59 (NTEEKSSSFPAPQTDPLGDPDQINEDKRHSQGTFT) is disordered. Ser-54 bears the Phosphoserine mark. Positions 84–89 (NKNNIA) are excised as a propeptide. Phosphoserine is present on residues Ser-105 and Ser-108. Arg-127 carries the arginine amide modification. A propeptide spanning residues 131 to 145 (DFPEEVNIVEELRRR) is cleaved from the precursor. 2 positions are modified to phosphoserine: Ser-150 and Ser-152.

This sequence belongs to the glucagon family. Post-translationally, proglucagon is post-translationally processed in a tissue-specific manner in pancreatic A cells and intestinal L cells. In pancreatic A cells, the major bioactive hormone is glucagon cleaved by PCSK2/PC2. In the intestinal L cells PCSK1/PC1 liberates GLP-1, GLP-2, glicentin and oxyntomodulin. GLP-1 is further N-terminally truncated by post-translational processing in the intestinal L cells resulting in GLP-1(7-37) GLP-1-(7-36)amide. The C-terminal amidation is neither important for the metabolism of GLP-1 nor for its effects on the endocrine pancreas. As to expression, glucagon is secreted in the A cells of the islets of Langerhans. GLP-1, GLP-2, oxyntomodulin and glicentin are secreted from enteroendocrine cells throughout the gastrointestinal tract.

It localises to the secreted. Functionally, plays a key role in glucose metabolism and homeostasis. Regulates blood glucose by increasing gluconeogenesis and decreasing glycolysis. A counterregulatory hormone of insulin, raises plasma glucose levels in response to insulin-induced hypoglycemia. Plays an important role in initiating and maintaining hyperglycemic conditions in diabetes. Its function is as follows. Potent stimulator of glucose-dependent insulin release. Also stimulates insulin release in response to IL6. Plays important roles on gastric motility and the suppression of plasma glucagon levels. May be involved in the suppression of satiety and stimulation of glucose disposal in peripheral tissues, independent of the actions of insulin. Has growth-promoting activities on intestinal epithelium. May also regulate the hypothalamic pituitary axis (HPA) via effects on LH, TSH, CRH, oxytocin, and vasopressin secretion. Increases islet mass through stimulation of islet neogenesis and pancreatic beta cell proliferation. Inhibits beta cell apoptosis. Stimulates intestinal growth and up-regulates villus height in the small intestine, concomitant with increased crypt cell proliferation and decreased enterocyte apoptosis. The gastrointestinal tract, from the stomach to the colon is the principal target for GLP-2 action. Plays a key role in nutrient homeostasis, enhancing nutrient assimilation through enhanced gastrointestinal function, as well as increasing nutrient disposal. Stimulates intestinal glucose transport and decreases mucosal permeability. In terms of biological role, significantly reduces food intake. Inhibits gastric emptying in humans. Suppression of gastric emptying may lead to increased gastric distension, which may contribute to satiety by causing a sensation of fullness. Functionally, may modulate gastric acid secretion and the gastro-pyloro-duodenal activity. May play an important role in intestinal mucosal growth in the early period of life. In Bos taurus (Bovine), this protein is Pro-glucagon (GCG).